The following is a 630-amino-acid chain: Putative adenylate cyclase regulatory protein (630 aa).

The RING-type zinc finger occupies 10-46 (CAVCREPWAEGALELFPCRHVFCTVCVVERWRCPSCQ). LRR repeat units lie at residues 184–206 (FLVHLEVDGSRGVTDITGLCRLK), 207–230 (TLEALSLDSCINITKGFDKICALP), 231–251 (QLTSLSLCQTNVTDKDLRCIH), 255–277 (KLKVLRYSSCHEITDLTAIGGMR), 278–301 (SLEKLSLSGCWNVTKGLEELCKFS), 302–324 (NLRELDISGCLVLGSAVVLKNLI), 325–347 (NLKVLSVSNCKNFKDLNGLERLV), 348–370 (NLDKLNLSGCHGVSSLGFVANLS), 371–393 (NLKELDISGCESLVCFDGLQDLN), 394–416 (NLEVLYLRDVKSFTNVGAIKNLS), 417–439 (KMRELDLSGCERITSLSGLETLK), 440–462 (GLEELSLEGCGEIMSFDPIWSLH), 463–485 (HLRVLYVSECGNLEDLSGLEGIT), 486–508 (GLEELYLHGCRKCTNFGPIWNLR), 509–531 (NVCVVELSCCENLEDLSGLQCLT), 532–554 (GLEELYLIGCEEITPIGVVGNLR), 555–577 (NLKCLSTCWCANLKELGGLDRLV), and 578–599 (NLEKLDLSGCCGLSSSVFMELM).

Functionally, may interact with adenylate cyclase to regulate its activity. In terms of biological role, may be involved in the postranscriptional regulation of genes in VSG expression sites. The sequence is that of Putative adenylate cyclase regulatory protein (ESAG8C) from Trypanosoma equiperdum.